A 243-amino-acid chain; its full sequence is 2-O-methyltransferase NoeI (243 aa).

Belongs to the FkbM methyltransferase family.

Its subcellular location is the cytoplasm. In terms of biological role, required for 2-O-methylation of the fucosyl group of Nod factors. The protein is 2-O-methyltransferase NoeI (noeI) of Sinorhizobium fredii (strain NBRC 101917 / NGR234).